The chain runs to 208 residues: Cytochrome c biogenesis ATP-binding export protein CcmA (208 aa).

In terms of domain architecture, ABC transporter spans 3–206; it reads LSGKDLAAHR…LEKFVPSQER (204 aa). 35–42 contributes to the ATP binding site; the sequence is GPNGIGKS.

This sequence belongs to the ABC transporter superfamily. CcmA exporter (TC 3.A.1.107) family. As to quaternary structure, the complex is composed of two ATP-binding proteins (CcmA) and two transmembrane proteins (CcmB).

It localises to the cell inner membrane. The enzyme catalyses heme b(in) + ATP + H2O = heme b(out) + ADP + phosphate + H(+). In terms of biological role, part of the ABC transporter complex CcmAB involved in the biogenesis of c-type cytochromes; once thought to export heme, this seems not to be the case, but its exact role is uncertain. Responsible for energy coupling to the transport system. The chain is Cytochrome c biogenesis ATP-binding export protein CcmA from Bartonella quintana (strain Toulouse) (Rochalimaea quintana).